A 414-amino-acid polypeptide reads, in one-letter code: MSGIIATYLIHDDSHNLEKKAEQIALGLTIGSWTHLPHLLQEQLKQHKGNVIHVEELAEHEHTNSYLRKKVKRGIIKIEYPLLNFSPDLPAILTTTFGKLSLDGEVKLIDLTFSDELKKHFPGPKFGIDGIRNLLQVHDRPLLMSIFKGMIGRNIGYLKTQLRDQAIGGVDIVKDDEILFENALTPLTKRIVSGKEVLQSVYETYGHKTLYAVNLTGRTFDLKENAKRAVQAGADILLFNVFAYGLDVLQSLAEDDEIPVPIMAHPAVSGAYSASKLYGVSSPLLLGKLLRYAGADFSLFPSPYGSVALEKEEALAISKYLTEDDASFKKSFSVPSAGIHPGFVPFIVRDFGKDVVINAGGGIHGHPNGAQGGGKAFRTAIDATLQNKPLHEVDDINLHSALQIWGNPSYEVKL.

The active-site Proton acceptor is Lys99. Substrate contacts are provided by residues Lys148, 174 to 177 (KDDE), His265, Gly338, and 360 to 361 (GG). Residues Lys174, Asp176, and Glu177 each contribute to the Mg(2+) site. An N6-carboxylysine modification is found at Lys174.

This sequence belongs to the RuBisCO large chain family. Type IV subfamily. As to quaternary structure, homodimer. Requires Mg(2+) as cofactor.

The catalysed reaction is 5-methylsulfanyl-2,3-dioxopentyl phosphate = 2-hydroxy-5-methylsulfanyl-3-oxopent-1-enyl phosphate. It participates in amino-acid biosynthesis; L-methionine biosynthesis via salvage pathway; L-methionine from S-methyl-5-thio-alpha-D-ribose 1-phosphate: step 3/6. Catalyzes the enolization of 2,3-diketo-5-methylthiopentyl-1-phosphate (DK-MTP-1-P) into 2-hydroxy-3-keto-5-methylthiopentenyl-1-phosphate (HK-MTPenyl-1-P). This Bacillus cereus (strain ATCC 14579 / DSM 31 / CCUG 7414 / JCM 2152 / NBRC 15305 / NCIMB 9373 / NCTC 2599 / NRRL B-3711) protein is 2,3-diketo-5-methylthiopentyl-1-phosphate enolase.